We begin with the raw amino-acid sequence, 251 residues long: 3-deoxy-manno-octulosonate cytidylyltransferase (251 aa).

It belongs to the KdsB family.

It localises to the cytoplasm. The catalysed reaction is 3-deoxy-alpha-D-manno-oct-2-ulosonate + CTP = CMP-3-deoxy-beta-D-manno-octulosonate + diphosphate. It participates in nucleotide-sugar biosynthesis; CMP-3-deoxy-D-manno-octulosonate biosynthesis; CMP-3-deoxy-D-manno-octulosonate from 3-deoxy-D-manno-octulosonate and CTP: step 1/1. The protein operates within bacterial outer membrane biogenesis; lipopolysaccharide biosynthesis. Functionally, activates KDO (a required 8-carbon sugar) for incorporation into bacterial lipopolysaccharide in Gram-negative bacteria. The polypeptide is 3-deoxy-manno-octulosonate cytidylyltransferase (Chelativorans sp. (strain BNC1)).